Reading from the N-terminus, the 530-residue chain is Phosphoenolpyruvate carboxykinase (ATP) (530 aa).

Positions 58, 195, and 201 each coordinate substrate. ATP-binding positions include Lys-201, His-220, and 236 to 244; that span reads GLSGTGKTT. 2 residues coordinate Mn(2+): Lys-201 and His-220. Residue Asp-257 coordinates Mn(2+). ATP contacts are provided by residues Glu-285, Arg-321, 440-441, and Thr-446; that span reads RI. Arg-321 is a binding site for substrate.

The protein belongs to the phosphoenolpyruvate carboxykinase (ATP) family. Requires Mn(2+) as cofactor.

It is found in the cytoplasm. It catalyses the reaction oxaloacetate + ATP = phosphoenolpyruvate + ADP + CO2. It participates in carbohydrate biosynthesis; gluconeogenesis. Functionally, involved in the gluconeogenesis. Catalyzes the conversion of oxaloacetate (OAA) to phosphoenolpyruvate (PEP) through direct phosphoryl transfer between the nucleoside triphosphate and OAA. The polypeptide is Phosphoenolpyruvate carboxykinase (ATP) (Staphylococcus aureus (strain Mu3 / ATCC 700698)).